A 201-amino-acid polypeptide reads, in one-letter code: Large ribosomal subunit protein uL4 (201 aa).

The segment at K44–R68 is disordered.

This sequence belongs to the universal ribosomal protein uL4 family. In terms of assembly, part of the 50S ribosomal subunit.

One of the primary rRNA binding proteins, this protein initially binds near the 5'-end of the 23S rRNA. It is important during the early stages of 50S assembly. It makes multiple contacts with different domains of the 23S rRNA in the assembled 50S subunit and ribosome. Functionally, forms part of the polypeptide exit tunnel. The polypeptide is Large ribosomal subunit protein uL4 (Xanthomonas campestris pv. campestris (strain 8004)).